Consider the following 144-residue polypeptide: 3-dehydroquinate dehydratase (144 aa).

The active-site Proton acceptor is the Y24. Residues N76, H82, and D89 each coordinate substrate. The active-site Proton donor is H102. Residues 103–104 (LS) and R113 each bind substrate.

Belongs to the type-II 3-dehydroquinase family. Homododecamer.

The enzyme catalyses 3-dehydroquinate = 3-dehydroshikimate + H2O. It functions in the pathway metabolic intermediate biosynthesis; chorismate biosynthesis; chorismate from D-erythrose 4-phosphate and phosphoenolpyruvate: step 3/7. Its function is as follows. Catalyzes a trans-dehydration via an enolate intermediate. This chain is 3-dehydroquinate dehydratase, found in Bordetella bronchiseptica (strain ATCC BAA-588 / NCTC 13252 / RB50) (Alcaligenes bronchisepticus).